We begin with the raw amino-acid sequence, 187 residues long: MMKIIAFVGMPASGKSEASRIAAEMDIPVIIMGDVIRKEVLKRGLEPNDSNTGMVATDLRKCEGMDAVARRCVSQIRETGSELVVVDGVRGIAEVECFRQEFGKGFILISIYAPLEVRFSRVQKRGRSDDMNSIDGLRQRDERELSWGMGEAIEASNVEIENSFTLETFRKDVNDVLNNYLKSNSEK.

9–16 (GMPASGKS) contacts ATP.

This sequence belongs to the UPF0200 family.

This Methanosarcina acetivorans (strain ATCC 35395 / DSM 2834 / JCM 12185 / C2A) protein is UPF0200 protein MA_4660.